The sequence spans 1203 residues: DNA-directed RNA polymerase subunit beta (1203 aa).

A compositionally biased stretch (basic and acidic residues) spans 1174–1195 (AAQEAKAAFEAEEAEKATKAEA). The tract at residues 1174-1203 (AAQEAKAAFEAEEAEKATKAEATEEAAEQE) is disordered.

It belongs to the RNA polymerase beta chain family. In terms of assembly, the RNAP catalytic core consists of 2 alpha, 1 beta, 1 beta' and 1 omega subunit. When a sigma factor is associated with the core the holoenzyme is formed, which can initiate transcription.

The catalysed reaction is RNA(n) + a ribonucleoside 5'-triphosphate = RNA(n+1) + diphosphate. Functionally, DNA-dependent RNA polymerase catalyzes the transcription of DNA into RNA using the four ribonucleoside triphosphates as substrates. This Streptococcus pneumoniae (strain P1031) protein is DNA-directed RNA polymerase subunit beta.